The sequence spans 33 residues: Brevinin-2PTe (33 aa).

The cysteines at positions 27 and 33 are disulfide-linked.

In terms of tissue distribution, expressed by the skin glands.

The protein localises to the secreted. Has antibacterial activity against the Gram-positive bacterium S.aureus ATCC 25923 (MIC=36 uM) and the Gram-negative bacterium E.coli ATCC 25726 (MIC=18 uM). This chain is Brevinin-2PTe, found in Pulchrana picturata (Malaysian fire frog).